Consider the following 201-residue polypeptide: MELVMKDAECALTVSETTFGRDFNEALVHQVVVAYAAGARQGTRAQKSRAEVKASRKKPWRQKGTGRARAGSVKSPIWRSGGITFAAKPQDHSQKVNKKMYQGALKSILSELVRQNRLIVVETFSVEKPKTKLLIQKLKEMSLRDVLIVTEEVDENLFLAARNLYKVDVRDAAGIDPVSLISFDKVVMTGNAVKQLEEMLA.

The tract at residues 44–73 (RAQKSRAEVKASRKKPWRQKGTGRARAGSV) is disordered. Basic residues predominate over residues 55 to 66 (SRKKPWRQKGTG).

Belongs to the universal ribosomal protein uL4 family. Part of the 50S ribosomal subunit.

Its function is as follows. One of the primary rRNA binding proteins, this protein initially binds near the 5'-end of the 23S rRNA. It is important during the early stages of 50S assembly. It makes multiple contacts with different domains of the 23S rRNA in the assembled 50S subunit and ribosome. Forms part of the polypeptide exit tunnel. The polypeptide is Large ribosomal subunit protein uL4 (Hamiltonella defensa subsp. Acyrthosiphon pisum (strain 5AT)).